The chain runs to 292 residues: MHNLRNILFVITLIGQKYGLTSSQNKELCDVTSSTGLLDSIKVMASHVKEQLKDKGTSEVAQPIVSPDPTDCADILLNGYRSSGGYRIWPKSWMTVGTLNVYCDMETDGGGWTVIQRRGNYGNPSDYFYKPWKNYKLGFGNIEKDFWLGNDRIFALTNQRNYMIRFDLKDKENDTRYAIYQDFWIENEDYLYCLHIGNYSGDAGNSFGRHNGHNFSTIDKDHDTHETHCAQTYKGGWWYDRCHESNLNGLYLNGEHNSYADGIEWRAWKGYHYSLPQVEMKIRPVEFNIIGN.

A signal peptide spans 1–23; the sequence is MHNLRNILFVITLIGQKYGLTSS. A Pyrrolidone carboxylic acid modification is found at Gln-24. The Fibrinogen C-terminal domain occupies 63–286; it reads PIVSPDPTDC…QVEMKIRPVE (224 aa). Cysteines 72 and 103 form a disulfide. N-linked (GlcNAc...) asparagine glycans are attached at residues Asn-173, Asn-198, and Asn-214. Residues Asp-221, His-225, and Thr-227 each contribute to the Ca(2+) site. A disulfide bridge connects residues Cys-229 and Cys-242.

As to quaternary structure, multimeric. PubMed:10468566 and PubMed:11707569 are in disagreement about the nature of the multimer, PubMed:10468566 finds hexamers and octamers, the results in PubMed:11707569 suggest tetramers. Strongly expressed in heart and intestine, weakly expressed in hepatopancreas. Not found in hemocytes, stomach, nervous tissue or skeletal muscle.

The protein resides in the secreted. Functionally, lectin involved in innate immunity. Agglutinates all types of human erythrocytes, Gram-positive and Gram-negative bacteria. Has a stronger agglutinating activity towards Gram-negative bacteria than towards Gram-positive bacteria. Specifically recognizes acetyl group-containing substances on agglutinated cells. The hemagglutinating activity was inhibited by EDTA, acetyl group-containing mono- and disaccharides, N-acetyl derivatives of amino acids, other acetyl group-containing substances, propionamide and benzamide. Enhances the antimicrobial activity of big defensin against Gram-positive bacteria but not against Gram-negative bacteria. This is Techylectin-5A from Tachypleus tridentatus (Japanese horseshoe crab).